Reading from the N-terminus, the 625-residue chain is Chaperone protein DnaK (625 aa).

At threonine 197 the chain carries Phosphothreonine; by autocatalysis. The interval 598–625 is disordered; the sequence is AYAKEQGGTQQGTDTKKKDDDVIDAEVE.

Belongs to the heat shock protein 70 family.

Its function is as follows. Acts as a chaperone. This is Chaperone protein DnaK from Helicobacter hepaticus (strain ATCC 51449 / 3B1).